The primary structure comprises 314 residues: MKQNPKISLIGSGNIGGTLAHLISLRELGDIVLFDVTEGVPQGKALDLMQAGTIAGSDINIKGTNDYKDIEGSDAIIITAGLPRKPGMSREDLISINTGIMKTVAANVKKYAPDAFVIVITNPLDVMVYVMLKESGLPHNKVIGMAGVLDSSRFNLFLAEEFKVSVSNVNSMVLGGHGDAMVPLARYSTISGVPIPDLIKMGLSSNENIEKIIDRTRNGGGEIVALLKTGSAYYAPAASAIEMLESYLKDKRQILTCAAHLQGEYGVHDLYVGVPIMIGKEGVLRVIELQLTTEEKALFDKSVEGVKKLIETIK.

NAD(+)-binding positions include 11 to 16 (GSGNIG) and Asp-35. Arg-84 and Arg-90 together coordinate substrate. Residues Asn-97 and 120–122 (ITN) each bind NAD(+). Residues Asn-122 and Arg-153 each coordinate substrate. Catalysis depends on His-177, which acts as the Proton acceptor.

Belongs to the LDH/MDH superfamily. MDH type 3 family.

The enzyme catalyses (S)-malate + NAD(+) = oxaloacetate + NADH + H(+). Catalyzes the reversible oxidation of malate to oxaloacetate. The chain is Malate dehydrogenase from Rickettsia africae (strain ESF-5).